A 467-amino-acid chain; its full sequence is UDP-N-acetylmuramate--L-alanine ligase (467 aa).

An ATP-binding site is contributed by Gly114 to Thr120.

Belongs to the MurCDEF family.

Its subcellular location is the cytoplasm. The catalysed reaction is UDP-N-acetyl-alpha-D-muramate + L-alanine + ATP = UDP-N-acetyl-alpha-D-muramoyl-L-alanine + ADP + phosphate + H(+). The protein operates within cell wall biogenesis; peptidoglycan biosynthesis. Cell wall formation. This chain is UDP-N-acetylmuramate--L-alanine ligase, found in Bradyrhizobium sp. (strain ORS 278).